We begin with the raw amino-acid sequence, 69 residues long: Cytochrome c oxidase subunit 8A, mitochondrial (69 aa).

A mitochondrion-targeting transit peptide spans 1-25 (MSVLTPLLLRSLTGSARRLMVPRAQ). Positions 2-19 (SVLTPLLLRSLTGSARRL) match the SIFI-degron motif. Topologically, residues 26–36 (VHSKPAREQLG) are mitochondrial matrix. The helical transmembrane segment at 37 to 60 (VLDITIGLTSCFVCCLLPAGWVLS) threads the bilayer. Residues 61–69 (HLESYKKRE) lie on the Mitochondrial intermembrane side of the membrane.

Belongs to the cytochrome c oxidase VIII family. In terms of assembly, component of the cytochrome c oxidase (complex IV, CIV), a multisubunit enzyme composed of 14 subunits. The complex is composed of a catalytic core of 3 subunits MT-CO1, MT-CO2 and MT-CO3, encoded in the mitochondrial DNA, and 11 supernumerary subunits COX4I, COX5A, COX5B, COX6A, COX6B, COX6C, COX7A, COX7B, COX7C, COX8 and NDUFA4, which are encoded in the nuclear genome. The complex exists as a monomer or a dimer and forms supercomplexes (SCs) in the inner mitochondrial membrane with NADH-ubiquinone oxidoreductase (complex I, CI) and ubiquinol-cytochrome c oxidoreductase (cytochrome b-c1 complex, complex III, CIII), resulting in different assemblies (supercomplex SCI(1)III(2)IV(1) and megacomplex MCI(2)III(2)IV(2)). Post-translationally, in response to mitochondrial stress, the precursor protein is ubiquitinated by the SIFI complex in the cytoplasm before mitochondrial import, leading to its degradation. Within the SIFI complex, UBR4 initiates ubiquitin chain that are further elongated or branched by KCMF1.

The protein resides in the mitochondrion inner membrane. Its pathway is energy metabolism; oxidative phosphorylation. Functionally, component of the cytochrome c oxidase, the last enzyme in the mitochondrial electron transport chain which drives oxidative phosphorylation. The respiratory chain contains 3 multisubunit complexes succinate dehydrogenase (complex II, CII), ubiquinol-cytochrome c oxidoreductase (cytochrome b-c1 complex, complex III, CIII) and cytochrome c oxidase (complex IV, CIV), that cooperate to transfer electrons derived from NADH and succinate to molecular oxygen, creating an electrochemical gradient over the inner membrane that drives transmembrane transport and the ATP synthase. Cytochrome c oxidase is the component of the respiratory chain that catalyzes the reduction of oxygen to water. Electrons originating from reduced cytochrome c in the intermembrane space (IMS) are transferred via the dinuclear copper A center (CU(A)) of subunit 2 and heme A of subunit 1 to the active site in subunit 1, a binuclear center (BNC) formed by heme A3 and copper B (CU(B)). The BNC reduces molecular oxygen to 2 water molecules using 4 electrons from cytochrome c in the IMS and 4 protons from the mitochondrial matrix. This chain is Cytochrome c oxidase subunit 8A, mitochondrial (Cox8a), found in Mus musculus (Mouse).